The following is an 88-amino-acid chain: Small ribosomal subunit protein bS20 (88 aa).

The protein belongs to the bacterial ribosomal protein bS20 family. In terms of assembly, part of the 30S ribosomal subunit.

Binds directly to 16S ribosomal RNA. The polypeptide is Small ribosomal subunit protein bS20 (rpsT) (Bacillus subtilis (strain 168)).